Consider the following 231-residue polypeptide: Allergen Ani s 10 (231 aa).

A signal peptide spans Met1 to Ser19. 7 tandem repeats follow at residues Gly28 to Ile56, Gly57 to Ile85, Gly86 to Ile114, Glu115 to Ile143, Glu144 to Ile172, Gly173 to Ile201, and Gly204 to Ala231. The tract at residues Gly28 to Ile201 is 6 X 29 AA tandem repeats of [EG]-G-P-G-P-V-[IV]-[SG]-G-S-G-I-G-[ND]-V-W-[NE]-K-A-N-E-[QP]-A-[AE]-[QEH]-Q-[EQ]-[NS]-I. 2 disordered regions span residues Gln107–Ile126 and Asn134–Ala231. Low complexity-rich tracts occupy residues Ile114–Gly123, Ile143–Gly152, and Pro177–Val187.

This is Allergen Ani s 10 from Anisakis simplex (Herring worm).